The following is a 1322-amino-acid chain: Transcription elongation factor SPT6-like (1322 aa).

Positions 1–17 (MNRIDEEPQIHEDPVEN) are enriched in basic and acidic residues. Disordered regions lie at residues 1–65 (MNRI…KKDE) and 90–113 (KRLK…DLSH). Acidic residues predominate over residues 18 to 33 (REEDDEDEDDQYEFDD). Positions 48–65 (EQRHCSEKKSRSRRKKDE) are enriched in basic and acidic residues. Over residues 97-110 (EEEDKINNDDDDDD) the composition is skewed to acidic residues. The S1 motif domain occupies 1017-1088 (GRIVQATVKK…QRYHVLLVCK (72 aa)).

This sequence belongs to the SPT6 family.

Its subcellular location is the nucleus. Functionally, transcription elongation factor that enhances the transcription elongation by RNA polymerase II (RNAPII). In Arabidopsis thaliana (Mouse-ear cress), this protein is Transcription elongation factor SPT6-like.